Here is a 277-residue protein sequence, read N- to C-terminus: Pantothenate synthetase (277 aa).

26–33 (MGNLHEGH) provides a ligand contact to ATP. H33 functions as the Proton donor in the catalytic mechanism. A (R)-pantoate-binding site is contributed by Q57. Q57 lines the beta-alanine pocket. 144-147 (GKKD) is an ATP binding site. Q150 provides a ligand contact to (R)-pantoate. ATP contacts are provided by residues V173 and 181-184 (LSSR).

This sequence belongs to the pantothenate synthetase family. As to quaternary structure, homodimer.

It is found in the cytoplasm. The catalysed reaction is (R)-pantoate + beta-alanine + ATP = (R)-pantothenate + AMP + diphosphate + H(+). It functions in the pathway cofactor biosynthesis; (R)-pantothenate biosynthesis; (R)-pantothenate from (R)-pantoate and beta-alanine: step 1/1. Its function is as follows. Catalyzes the condensation of pantoate with beta-alanine in an ATP-dependent reaction via a pantoyl-adenylate intermediate. The protein is Pantothenate synthetase of Paraburkholderia xenovorans (strain LB400).